A 491-amino-acid polypeptide reads, in one-letter code: Homeobox protein unplugged (491 aa).

Disordered regions lie at residues 1-23, 46-69, 124-146, and 227-329; these read MERP…TKTT, SASA…QEQE, AGKE…PLPH, and FSPA…RRTA. Residues 254–264 are compositionally biased toward polar residues; sequence GDSSSDISLTL. Over residues 305-316 the composition is skewed to gly residues; the sequence is GLGGKDSQGNGS. The homeobox DNA-binding region spans 323–382; the sequence is SRRRRTAFTSEQLLELEREFHAKKYLSLTERSQIATSLKLSEVQVKIWFQNRRAKWKRVK.

The protein localises to the nucleus. Functionally, plays a regulatory role in neural branching of the tracheae: segment-specific aspects of these neural branching patterns appear to be generated by homeotic regulation of expression. This Drosophila pseudoobscura pseudoobscura (Fruit fly) protein is Homeobox protein unplugged.